The following is a 485-amino-acid chain: Ribosomal protein uS12 methylthiotransferase RimO (485 aa).

In terms of domain architecture, MTTase N-terminal spans 37-147 (SRIGFVSLGC…VVEQVHEHLP (111 aa)). 6 residues coordinate [4Fe-4S] cluster: C46, C82, C111, C179, C183, and C186. The 238-residue stretch at 165–402 (LTPRHYAYLK…MEVQGEISAA (238 aa)) folds into the Radical SAM core domain. Residues 405-471 (KARIGNEYQV…EHDVWAVLSE (67 aa)) enclose the TRAM domain.

It belongs to the methylthiotransferase family. RimO subfamily. [4Fe-4S] cluster is required as a cofactor.

It localises to the cytoplasm. The enzyme catalyses L-aspartate(89)-[ribosomal protein uS12]-hydrogen + (sulfur carrier)-SH + AH2 + 2 S-adenosyl-L-methionine = 3-methylsulfanyl-L-aspartate(89)-[ribosomal protein uS12]-hydrogen + (sulfur carrier)-H + 5'-deoxyadenosine + L-methionine + A + S-adenosyl-L-homocysteine + 2 H(+). Catalyzes the methylthiolation of an aspartic acid residue of ribosomal protein uS12. This Alteromonas mediterranea (strain DSM 17117 / CIP 110805 / LMG 28347 / Deep ecotype) protein is Ribosomal protein uS12 methylthiotransferase RimO.